A 458-amino-acid polypeptide reads, in one-letter code: Bifunctional protein GlmU (458 aa).

The segment at 1–230 (MLQIDVVILA…DWEVVGVNDK (230 aa)) is pyrophosphorylase. Residues 9–12 (LAAG), lysine 23, glutamine 75, and 80–81 (GT) each bind UDP-N-acetyl-alpha-D-glucosamine. Aspartate 104 lines the Mg(2+) pocket. UDP-N-acetyl-alpha-D-glucosamine contacts are provided by glycine 139, glutamate 155, asparagine 170, and asparagine 228. Asparagine 228 serves as a coordination point for Mg(2+). Residues 231–251 (IQLSTLERAHQQDVAKGLMEQ) are linker. An N-acetyltransferase region spans residues 252 to 458 (GVMFADPARF…NWKRPKKNKD (207 aa)). Arginine 334 and lysine 352 together coordinate UDP-N-acetyl-alpha-D-glucosamine. The active-site Proton acceptor is histidine 364. Tyrosine 367 and asparagine 378 together coordinate UDP-N-acetyl-alpha-D-glucosamine. Acetyl-CoA is bound by residues alanine 381, 387–388 (NY), serine 406, alanine 424, and arginine 441.

This sequence in the N-terminal section; belongs to the N-acetylglucosamine-1-phosphate uridyltransferase family. It in the C-terminal section; belongs to the transferase hexapeptide repeat family. In terms of assembly, homotrimer. The cofactor is Mg(2+).

The protein resides in the cytoplasm. The enzyme catalyses alpha-D-glucosamine 1-phosphate + acetyl-CoA = N-acetyl-alpha-D-glucosamine 1-phosphate + CoA + H(+). The catalysed reaction is N-acetyl-alpha-D-glucosamine 1-phosphate + UTP + H(+) = UDP-N-acetyl-alpha-D-glucosamine + diphosphate. Its pathway is nucleotide-sugar biosynthesis; UDP-N-acetyl-alpha-D-glucosamine biosynthesis; N-acetyl-alpha-D-glucosamine 1-phosphate from alpha-D-glucosamine 6-phosphate (route II): step 2/2. The protein operates within nucleotide-sugar biosynthesis; UDP-N-acetyl-alpha-D-glucosamine biosynthesis; UDP-N-acetyl-alpha-D-glucosamine from N-acetyl-alpha-D-glucosamine 1-phosphate: step 1/1. It functions in the pathway bacterial outer membrane biogenesis; LPS lipid A biosynthesis. Functionally, catalyzes the last two sequential reactions in the de novo biosynthetic pathway for UDP-N-acetylglucosamine (UDP-GlcNAc). The C-terminal domain catalyzes the transfer of acetyl group from acetyl coenzyme A to glucosamine-1-phosphate (GlcN-1-P) to produce N-acetylglucosamine-1-phosphate (GlcNAc-1-P), which is converted into UDP-GlcNAc by the transfer of uridine 5-monophosphate (from uridine 5-triphosphate), a reaction catalyzed by the N-terminal domain. The polypeptide is Bifunctional protein GlmU (Nitrosomonas eutropha (strain DSM 101675 / C91 / Nm57)).